Consider the following 283-residue polypeptide: Acetylglutamate kinase (283 aa).

Residues 64-65 (GG), Arg86, and Asn178 each bind substrate.

It belongs to the acetylglutamate kinase family. ArgB subfamily.

Its subcellular location is the cytoplasm. The catalysed reaction is N-acetyl-L-glutamate + ATP = N-acetyl-L-glutamyl 5-phosphate + ADP. Its pathway is amino-acid biosynthesis; L-arginine biosynthesis; N(2)-acetyl-L-ornithine from L-glutamate: step 2/4. Catalyzes the ATP-dependent phosphorylation of N-acetyl-L-glutamate. The sequence is that of Acetylglutamate kinase from Lactococcus lactis subsp. cremoris (strain SK11).